The chain runs to 245 residues: Serine/arginine-rich splicing factor 1B (245 aa).

Positions C15–S90 constitute an RRM 1 domain. Disordered regions lie at residues R89 to R116 and K192 to T245. The segment covering G91 to A106 has biased composition (gly residues). In terms of domain architecture, RRM 2 spans Y120–D194. Residues S204–T245 are compositionally biased toward basic residues.

This sequence belongs to the splicing factor SR family.

It is found in the cytoplasm. Its subcellular location is the nucleus speckle. Its function is as follows. May play a role in preventing exon skipping, ensuring the accuracy of splicing and regulating alternative splicing. The protein is Serine/arginine-rich splicing factor 1B (srsf1b) of Danio rerio (Zebrafish).